Consider the following 285-residue polypeptide: Large ribosomal subunit protein uL1m (285 aa).

The N-terminal 19 residues, 1–19, are a transit peptide targeting the mitochondrion; it reads MLSVVAIPKICVTGPARRC.

The protein belongs to the universal ribosomal protein uL1 family. In terms of assembly, component of the mitochondrial large ribosomal subunit (mt-LSU). Mature yeast 74S mitochondrial ribosomes consist of a small (37S) and a large (54S) subunit. The 37S small subunit contains a 15S ribosomal RNA (15S mt-rRNA) and 34 different proteins. The 54S large subunit contains a 21S rRNA (21S mt-rRNA) and 46 different proteins.

The protein resides in the mitochondrion. Functionally, component of the mitochondrial ribosome (mitoribosome), a dedicated translation machinery responsible for the synthesis of mitochondrial genome-encoded proteins, including at least some of the essential transmembrane subunits of the mitochondrial respiratory chain. The mitoribosomes are attached to the mitochondrial inner membrane and translation products are cotranslationally integrated into the membrane. The protein is Large ribosomal subunit protein uL1m (MRPL1) of Saccharomyces cerevisiae (strain ATCC 204508 / S288c) (Baker's yeast).